A 226-amino-acid polypeptide reads, in one-letter code: Leucyl/phenylalanyl-tRNA--protein transferase (226 aa).

The protein belongs to the L/F-transferase family.

Its subcellular location is the cytoplasm. The enzyme catalyses N-terminal L-lysyl-[protein] + L-leucyl-tRNA(Leu) = N-terminal L-leucyl-L-lysyl-[protein] + tRNA(Leu) + H(+). It catalyses the reaction N-terminal L-arginyl-[protein] + L-leucyl-tRNA(Leu) = N-terminal L-leucyl-L-arginyl-[protein] + tRNA(Leu) + H(+). It carries out the reaction L-phenylalanyl-tRNA(Phe) + an N-terminal L-alpha-aminoacyl-[protein] = an N-terminal L-phenylalanyl-L-alpha-aminoacyl-[protein] + tRNA(Phe). Its function is as follows. Functions in the N-end rule pathway of protein degradation where it conjugates Leu, Phe and, less efficiently, Met from aminoacyl-tRNAs to the N-termini of proteins containing an N-terminal arginine or lysine. This chain is Leucyl/phenylalanyl-tRNA--protein transferase, found in Pseudomonas aeruginosa (strain ATCC 15692 / DSM 22644 / CIP 104116 / JCM 14847 / LMG 12228 / 1C / PRS 101 / PAO1).